Reading from the N-terminus, the 145-residue chain is 3-hydroxyacyl-[acyl-carrier-protein] dehydratase FabZ (145 aa).

His48 is an active-site residue.

This sequence belongs to the thioester dehydratase family. FabZ subfamily.

The protein resides in the cytoplasm. The catalysed reaction is a (3R)-hydroxyacyl-[ACP] = a (2E)-enoyl-[ACP] + H2O. In terms of biological role, involved in unsaturated fatty acids biosynthesis. Catalyzes the dehydration of short chain beta-hydroxyacyl-ACPs and long chain saturated and unsaturated beta-hydroxyacyl-ACPs. This is 3-hydroxyacyl-[acyl-carrier-protein] dehydratase FabZ from Cellvibrio japonicus (strain Ueda107) (Pseudomonas fluorescens subsp. cellulosa).